The following is a 222-amino-acid chain: Matrix protein (222 aa).

A PTAP/PSAP motif motif is present at residues 46–49; it reads PTAP.

Homomultimer. Interacts with viral nucleocapsid. Interacts with host TSG101.

The protein localises to the virion membrane. It localises to the host endomembrane system. The protein resides in the host nucleus membrane. Its function is as follows. Plays a major role in assembly and budding of virion, by recruiting cellular partners of the ESCRT complexes that play a key role in releasing the budding particle from the host membrane. Condensates the ribonucleocapsid core during virus assembly. This is Matrix protein (M) from Drosophila melanogaster (Fruit fly).